Consider the following 471-residue polypeptide: Collagenase 3 (471 aa).

Positions 1-19 are cleaved as a signal peptide; it reads MQPGVLAACLLLSWTHCWS. A propeptide spans 20–103 (activation peptide); the sequence is LPLLNSNEDD…PRCGVPDVGE (84 aa). The Cysteine switch motif lies at 94–101; it reads PRCGVPDV. Position 96 (Cys96) interacts with Zn(2+). Asn117 carries an N-linked (GlcNAc...) asparagine glycan. Asp128 is a binding site for Ca(2+). N-linked (GlcNAc...) asparagine glycans are attached at residues Asn152 and Asn158. Asp162 provides a ligand contact to Ca(2+). The Zn(2+) site is built by His172 and Asp174. The interval 176–246 is interaction with TIMP2; it reads YPFDGPSGLL…GALMFPIYTY (71 aa). Asp179, Gly180, Ser182, and Leu184 together coordinate Ca(2+). His187 is a binding site for Zn(2+). Positions 194, 196, and 198 each coordinate Ca(2+). His200 contributes to the Zn(2+) binding site. Ca(2+) is bound by residues Asp202, Asp203, and Glu205. His222 is a binding site for Zn(2+). Glu223 is a catalytic residue. Residues His226, His232, and Met240 each coordinate Zn(2+). Positions 263–284 are disordered; the sequence is QSLYGPGDEDPNPKHPKTPDKC. The interval 268 to 471 is interaction with collagen; sequence PGDEDPNPKH…VMPTNSLLWC (204 aa). Over residues 273–284 the composition is skewed to basic and acidic residues; it reads PNPKHPKTPDKC. Hemopexin repeat units lie at residues 281–330, 331–377, 379–427, and 428–471; these read PDKC…WPEL, PNRI…GFPR, VKKI…FPGI, and GGKV…LLWC. Residues Cys284 and Cys471 are joined by a disulfide bond. 4 residues coordinate Ca(2+): Asp291, Ile293, Asp335, and Ala337. Position 366 is a phosphotyrosine; by PKDCC (Tyr366). Ser383 and Ala385 together coordinate Ca(2+). Asn409 is a glycosylation site (N-linked (GlcNAc...) asparagine). Ca(2+) is bound by residues Asp432 and Val434.

Belongs to the peptidase M10A family. Ca(2+) serves as cofactor. It depends on Zn(2+) as a cofactor. In terms of processing, the proenzyme is activated by removal of the propeptide; this cleavage can be effected by other matrix metalloproteinases, such as MMP2, MMP3 and MMP14 and may involve several cleavage steps. Cleavage can also be autocatalytic, after partial maturation by another protease or after treatment with 4-aminophenylmercuric acetate (APMA) (in vitro). N-glycosylated. Post-translationally, tyrosine phosphorylated by PKDCC/VLK.

Its subcellular location is the secreted. The protein resides in the extracellular space. It localises to the extracellular matrix. Its function is as follows. Plays a role in the degradation of extracellular matrix proteins including fibrillar collagen, fibronectin, TNC and ACAN. Cleaves triple helical collagens, including type I, type II and type III collagen, but has the highest activity with soluble type II collagen. Can also degrade collagen type IV, type XIV and type X. May also function by activating or degrading key regulatory proteins, such as TGFB1 and CCN2. Plays a role in wound healing, tissue remodeling, cartilage degradation, bone development, bone mineralization and ossification. Required for normal embryonic bone development and ossification. Plays a role in the healing of bone fractures via endochondral ossification. Plays a role in wound healing, probably by a mechanism that involves proteolytic activation of TGFB1 and degradation of CCN2. Plays a role in keratinocyte migration during wound healing. May play a role in cell migration and in tumor cell invasion. The chain is Collagenase 3 (MMP13) from Oryctolagus cuniculus (Rabbit).